We begin with the raw amino-acid sequence, 329 residues long: L-arabinose-binding periplasmic protein (329 aa).

The signal sequence occupies residues 1-23 (MHKFTKALAAIGLAAVMSQSAMA).

The protein belongs to the bacterial solute-binding protein 2 family.

The protein localises to the periplasm. Functionally, involved in the high-affinity L-arabinose membrane transport system. Binds with high affinity to arabinose, but can also bind D-galactose (approximately 2-fold reduction) and D-fucose (approximately 40-fold reduction). The polypeptide is L-arabinose-binding periplasmic protein (araF) (Escherichia coli (strain K12)).